Reading from the N-terminus, the 812-residue chain is DNA translocase FtsK 1 (812 aa).

Positions M1–K11 are enriched in basic residues. The interval M1–V36 is disordered. Positions K25–V36 are enriched in basic and acidic residues. A run of 5 helical transmembrane segments spans residues I63 to I83, V116 to L136, I156 to L176, L184 to L204, and L210 to L230. Topologically, residues E231–L812 are cytoplasmic. The FtsK domain occupies G461–R670. G481–V486 is an ATP binding site.

The protein belongs to the FtsK/SpoIIIE/SftA family. Homohexamer. Forms a ring that surrounds DNA.

The protein resides in the cell inner membrane. Functionally, essential cell division protein that coordinates cell division and chromosome segregation. The N-terminus is involved in assembly of the cell-division machinery. The C-terminus functions as a DNA motor that moves dsDNA in an ATP-dependent manner towards the dif recombination site, which is located within the replication terminus region. Translocation stops specifically at Xer-dif sites, where FtsK interacts with the Xer recombinase, allowing activation of chromosome unlinking by recombination. FtsK orienting polar sequences (KOPS) guide the direction of DNA translocation. FtsK can remove proteins from DNA as it translocates, but translocation stops specifically at XerCD-dif site, thereby preventing removal of XerC and XerD from dif. This chain is DNA translocase FtsK 1 (ftsK1), found in Neisseria meningitidis serogroup B (strain ATCC BAA-335 / MC58).